We begin with the raw amino-acid sequence, 177 residues long: Bifunctional protein PyrR (177 aa).

The PRPP-binding motif lies at 99–111 (VVLVDDVLFTGRT).

Belongs to the purine/pyrimidine phosphoribosyltransferase family. PyrR subfamily.

The catalysed reaction is UMP + diphosphate = 5-phospho-alpha-D-ribose 1-diphosphate + uracil. Its function is as follows. Regulates the transcription of the pyrimidine nucleotide (pyr) operon in response to exogenous pyrimidines. In terms of biological role, also displays a weak uracil phosphoribosyltransferase activity which is not physiologically significant. The protein is Bifunctional protein PyrR of Geobacter sulfurreducens (strain ATCC 51573 / DSM 12127 / PCA).